An 84-amino-acid polypeptide reads, in one-letter code: Small ribosomal subunit protein uS17 (84 aa).

This sequence belongs to the universal ribosomal protein uS17 family. As to quaternary structure, part of the 30S ribosomal subunit.

Functionally, one of the primary rRNA binding proteins, it binds specifically to the 5'-end of 16S ribosomal RNA. The sequence is that of Small ribosomal subunit protein uS17 from Serratia proteamaculans (strain 568).